The following is a 289-amino-acid chain: 4-hydroxy-3-methylbut-2-enyl diphosphate reductase (289 aa).

Cys-13 is a [4Fe-4S] cluster binding site. The (2E)-4-hydroxy-3-methylbut-2-enyl diphosphate site is built by His-42 and His-76. Residues His-42 and His-76 each coordinate dimethylallyl diphosphate. Positions 42 and 76 each coordinate isopentenyl diphosphate. Cys-98 serves as a coordination point for [4Fe-4S] cluster. His-130 provides a ligand contact to (2E)-4-hydroxy-3-methylbut-2-enyl diphosphate. A dimethylallyl diphosphate-binding site is contributed by His-130. His-130 lines the isopentenyl diphosphate pocket. The Proton donor role is filled by Glu-132. Thr-168 serves as a coordination point for (2E)-4-hydroxy-3-methylbut-2-enyl diphosphate. Position 199 (Cys-199) interacts with [4Fe-4S] cluster. Residues Ser-227, Ser-228, Asn-229, and Ser-272 each coordinate (2E)-4-hydroxy-3-methylbut-2-enyl diphosphate. Positions 227, 228, 229, and 272 each coordinate dimethylallyl diphosphate. Positions 227, 228, 229, and 272 each coordinate isopentenyl diphosphate.

This sequence belongs to the IspH family. [4Fe-4S] cluster is required as a cofactor.

The catalysed reaction is isopentenyl diphosphate + 2 oxidized [2Fe-2S]-[ferredoxin] + H2O = (2E)-4-hydroxy-3-methylbut-2-enyl diphosphate + 2 reduced [2Fe-2S]-[ferredoxin] + 2 H(+). It catalyses the reaction dimethylallyl diphosphate + 2 oxidized [2Fe-2S]-[ferredoxin] + H2O = (2E)-4-hydroxy-3-methylbut-2-enyl diphosphate + 2 reduced [2Fe-2S]-[ferredoxin] + 2 H(+). The protein operates within isoprenoid biosynthesis; dimethylallyl diphosphate biosynthesis; dimethylallyl diphosphate from (2E)-4-hydroxy-3-methylbutenyl diphosphate: step 1/1. It participates in isoprenoid biosynthesis; isopentenyl diphosphate biosynthesis via DXP pathway; isopentenyl diphosphate from 1-deoxy-D-xylulose 5-phosphate: step 6/6. Its function is as follows. Catalyzes the conversion of 1-hydroxy-2-methyl-2-(E)-butenyl 4-diphosphate (HMBPP) into a mixture of isopentenyl diphosphate (IPP) and dimethylallyl diphosphate (DMAPP). Acts in the terminal step of the DOXP/MEP pathway for isoprenoid precursor biosynthesis. This Porphyromonas gingivalis (strain ATCC BAA-308 / W83) protein is 4-hydroxy-3-methylbut-2-enyl diphosphate reductase.